The chain runs to 414 residues: Phosphoglycerate kinase (414 aa).

Substrate is bound by residues Asp20–Asn22, Arg37, His60–Arg63, Arg117, and Arg164. Residues Glu338 and Gly364–Leu367 contribute to the ATP site.

Belongs to the phosphoglycerate kinase family. In terms of assembly, monomer.

The protein localises to the cytoplasm. The catalysed reaction is (2R)-3-phosphoglycerate + ATP = (2R)-3-phospho-glyceroyl phosphate + ADP. It participates in carbohydrate degradation; glycolysis; pyruvate from D-glyceraldehyde 3-phosphate: step 2/5. This Methanococcus maripaludis (strain DSM 14266 / JCM 13030 / NBRC 101832 / S2 / LL) protein is Phosphoglycerate kinase.